The chain runs to 450 residues: 3-phosphoshikimate 1-carboxyvinyltransferase (450 aa).

Residues 1–26 are disordered; it reads MSAHGDPIPMTAHPSGPLSGTAQVPG. The 3-phosphoshikimate site is built by K28, S29, and R33. K28 is a phosphoenolpyruvate binding site. Residues G101 and R129 each coordinate phosphoenolpyruvate. 3-phosphoshikimate-binding residues include S174, Q176, D327, and K354. Q176 is a binding site for phosphoenolpyruvate. Catalysis depends on D327, which acts as the Proton acceptor. Phosphoenolpyruvate is bound by residues R358 and R403.

This sequence belongs to the EPSP synthase family. In terms of assembly, monomer.

It localises to the cytoplasm. It catalyses the reaction 3-phosphoshikimate + phosphoenolpyruvate = 5-O-(1-carboxyvinyl)-3-phosphoshikimate + phosphate. It participates in metabolic intermediate biosynthesis; chorismate biosynthesis; chorismate from D-erythrose 4-phosphate and phosphoenolpyruvate: step 6/7. Functionally, catalyzes the transfer of the enolpyruvyl moiety of phosphoenolpyruvate (PEP) to the 5-hydroxyl of shikimate-3-phosphate (S3P) to produce enolpyruvyl shikimate-3-phosphate and inorganic phosphate. The protein is 3-phosphoshikimate 1-carboxyvinyltransferase of Dinoroseobacter shibae (strain DSM 16493 / NCIMB 14021 / DFL 12).